Reading from the N-terminus, the 557-residue chain is DNA replication factor Cdt1 (557 aa).

Residues 1–25 (MAQSRVTDFYACRRPGLTTPRAKSI) carry the PIP-box K+4 motif motif. The segment at 20 to 113 (PRAKSICLTP…VCPSPVKRTK (94 aa)) is disordered. At T28 the chain carries Phosphothreonine; by MAPK8. S30 carries the post-translational modification Phosphoserine. The short motif at 65–67 (RRL) is the Cyclin-binding motif element. Positions 69 to 81 (LPGLDSCPSSLPE) are enriched in low complexity. The span at 82–106 (PSSPAEPSPPADPSPPADPGSPVCP) shows a compositional bias: pro residues. S107 is modified (phosphoserine; by MAPK8). The segment at 163–203 (PSTPDAKVPTEQPCVEKAPAYQRFHALAQPGLPGLVLPYKY) is interaction with GMNN. At S392 the chain carries Phosphoserine. Residues 397-427 (RSAEPGSPGTSTPPLPATPPATPPAASPSAL) are disordered. A compositionally biased stretch (pro residues) spans 407–422 (STPPLPATPPATPPAA). The tract at residues 463-557 (LERLPELARV…LAHHVHAEGL (95 aa)) is interaction with LRWD1.

This sequence belongs to the Cdt1 family. In terms of assembly, interacts with GMNN; the interaction inhibits the binding of the MCM complex to origins of replication. Interacts with MCM6. Interacts with CDC6; are mutually dependent on one another for loading MCM complexes onto chromatin. Interacts with PCNA. Interacts with LRWD1 during G1 phase and during mitosis. Interacts with NDC80 subunit of the NDC80 complex; leading to kinetochore localization. Interacts with KAT7. Interacts with ubiquitin-binding protein FAF1; the interaction is likely to promote CDT1 degradation. Post-translationally, two independent E3 ubiquitin ligase complexes, SCF(SKP2) and the DCX(DTL) complex, mediated CDT1 degradation in S phase. Ubiquitinated by the DCX(DTL) complex, in response to DNA damage, leading to its degradation. Ubiquitination by the DCX(DTL) complex is necessary to ensure proper cell cycle regulation and is PCNA-dependent: interacts with PCNA via its PIP-box, while the presence of the containing the 'K+4' motif in the PIP box, recruit the DCX(DTL) complex, leading to its degradation. Phosphorylation at Thr-28 by CDK2 targets CDT1 for ubiquitynation by SCF(SKP2) E3 ubiquitin ligase and subsequent degradation. The interaction with GMNN protects it against ubiquitination. Deubiquitinated by USP37. Ubiquitinated and degraded by the SCF(FBXO31) complex during the G2 phase to prevent re-replication. Phosphorylation by cyclin A-dependent kinases at Thr-28 targets CDT1 for ubiquitynation by SCF(SKP2) E3 ubiquitin ligase and subsequent degradation. Phosphorylated at Thr-28 by MAPK8/JNK1, which blocks replication licensing in response to stress. Binding to GMNN is not affected by phosphorylation.

It is found in the nucleus. The protein localises to the chromosome. It localises to the centromere. The protein resides in the kinetochore. Functionally, required for both DNA replication and mitosis. DNA replication licensing factor, required for pre-replication complex assembly. Cooperates with CDC6 and the origin recognition complex (ORC) during G1 phase of the cell cycle to promote the loading of the mini-chromosome maintenance (MCM) complex onto DNA to generate pre-replication complexes (pre-RC). Required also for mitosis by promoting stable kinetochore-microtubule attachments. Potential oncogene. The sequence is that of DNA replication factor Cdt1 from Mus musculus (Mouse).